We begin with the raw amino-acid sequence, 830 residues long: DNA helicase MCM8 (830 aa).

In terms of domain architecture, MCM spans 394-601 (LFRIIVNSLC…DHDHLLSEHV (208 aa)). ATP is bound at residue 446–453 (GDPGLGKS).

It belongs to the MCM family. Component of the MCM8-MCM9 complex, which forms a hexamer composed of MCM8 and MCM9.

The protein localises to the nucleus. The catalysed reaction is ATP + H2O = ADP + phosphate + H(+). Its function is as follows. Component of the MCM8-MCM9 complex, a complex involved in homologous recombination repair following DNA interstrand cross-links and plays a key role during gametogenesis. The MCM8-MCM9 complex probably acts as a hexameric helicase required to process aberrant forks into homologous recombination substrates and to orchestrate homologous recombination with resection, fork stabilization and fork restart. This is DNA helicase MCM8 (MCM8) from Gallus gallus (Chicken).